A 156-amino-acid chain; its full sequence is Small ribosomal subunit protein uS7 (156 aa).

The protein belongs to the universal ribosomal protein uS7 family. In terms of assembly, part of the 30S ribosomal subunit. Contacts proteins S9 and S11.

Its function is as follows. One of the primary rRNA binding proteins, it binds directly to 16S rRNA where it nucleates assembly of the head domain of the 30S subunit. Is located at the subunit interface close to the decoding center, probably blocks exit of the E-site tRNA. This Mycobacteroides abscessus (strain ATCC 19977 / DSM 44196 / CCUG 20993 / CIP 104536 / JCM 13569 / NCTC 13031 / TMC 1543 / L948) (Mycobacterium abscessus) protein is Small ribosomal subunit protein uS7.